Consider the following 201-residue polypeptide: Recombination protein RecR (201 aa).

Residues 57-72 (CKSCRTFTEEDECAIC) form a C4-type zinc finger. Residues 81–176 (GQLCVVEMPA…KVTRIAHGIP (96 aa)) enclose the Toprim domain.

Belongs to the RecR family.

May play a role in DNA repair. It seems to be involved in an RecBC-independent recombinational process of DNA repair. It may act with RecF and RecO. This is Recombination protein RecR from Glaesserella parasuis serovar 5 (strain SH0165) (Haemophilus parasuis).